A 739-amino-acid polypeptide reads, in one-letter code: Catalase-peroxidase (739 aa).

The segment at residues 99-227 is a cross-link (tryptophyl-tyrosyl-methioninium (Trp-Tyr) (with M-253)); sequence WHSAGTYRMG…LAAVQMGLIY (129 aa). H100 functions as the Proton acceptor in the catalytic mechanism. A cross-link (tryptophyl-tyrosyl-methioninium (Tyr-Met) (with W-99)) is located at residues 227–253; sequence YVNPEGPDGNPDPVASGRDVRETFARM. Position 268 (H268) interacts with heme b.

It belongs to the peroxidase family. Peroxidase/catalase subfamily. As to quaternary structure, homodimer or homotetramer. Requires heme b as cofactor. In terms of processing, formation of the three residue Trp-Tyr-Met cross-link is important for the catalase, but not the peroxidase activity of the enzyme.

It carries out the reaction H2O2 + AH2 = A + 2 H2O. The enzyme catalyses 2 H2O2 = O2 + 2 H2O. Functionally, bifunctional enzyme with both catalase and broad-spectrum peroxidase activity. This is Catalase-peroxidase from Syntrophotalea carbinolica (strain DSM 2380 / NBRC 103641 / GraBd1) (Pelobacter carbinolicus).